Consider the following 308-residue polypeptide: Aspartate carbamoyltransferase catalytic subunit (308 aa).

2 residues coordinate carbamoyl phosphate: arginine 57 and threonine 58. Lysine 86 contacts L-aspartate. Carbamoyl phosphate is bound by residues arginine 107, histidine 135, and glutamine 138. Arginine 168 and arginine 229 together coordinate L-aspartate. The carbamoyl phosphate site is built by leucine 268 and proline 269.

It belongs to the aspartate/ornithine carbamoyltransferase superfamily. ATCase family. As to quaternary structure, heterooligomer of catalytic and regulatory chains.

The catalysed reaction is carbamoyl phosphate + L-aspartate = N-carbamoyl-L-aspartate + phosphate + H(+). Its pathway is pyrimidine metabolism; UMP biosynthesis via de novo pathway; (S)-dihydroorotate from bicarbonate: step 2/3. In terms of biological role, catalyzes the condensation of carbamoyl phosphate and aspartate to form carbamoyl aspartate and inorganic phosphate, the committed step in the de novo pyrimidine nucleotide biosynthesis pathway. This Pyrococcus abyssi (strain GE5 / Orsay) protein is Aspartate carbamoyltransferase catalytic subunit.